The following is a 473-amino-acid chain: Glutamate--tRNA ligase 1 (473 aa).

Positions 10 to 20 match the 'HIGH' region motif; sequence PSPTGFLHIGG. A 'KMSKS' region motif is present at residues 252–256; that stretch reads KLSKR. Lys-255 is a binding site for ATP.

The protein belongs to the class-I aminoacyl-tRNA synthetase family. Glutamate--tRNA ligase type 1 subfamily. Monomer.

The protein localises to the cytoplasm. It carries out the reaction tRNA(Glu) + L-glutamate + ATP = L-glutamyl-tRNA(Glu) + AMP + diphosphate. Catalyzes the attachment of glutamate to tRNA(Glu) in a two-step reaction: glutamate is first activated by ATP to form Glu-AMP and then transferred to the acceptor end of tRNA(Glu). This is Glutamate--tRNA ligase 1 from Wolbachia pipientis wMel.